A 176-amino-acid chain; its full sequence is ATP-dependent protease subunit HslV (176 aa).

T2 is an active-site residue. Residues A157, C160, and T163 each coordinate Na(+).

It belongs to the peptidase T1B family. HslV subfamily. A double ring-shaped homohexamer of HslV is capped on each side by a ring-shaped HslU homohexamer. The assembly of the HslU/HslV complex is dependent on binding of ATP.

It localises to the cytoplasm. It catalyses the reaction ATP-dependent cleavage of peptide bonds with broad specificity.. Allosterically activated by HslU binding. Functionally, protease subunit of a proteasome-like degradation complex believed to be a general protein degrading machinery. This chain is ATP-dependent protease subunit HslV, found in Buchnera aphidicola subsp. Schizaphis graminum (strain Sg).